Reading from the N-terminus, the 331-residue chain is LIM/homeobox protein Lhx9 (331 aa).

LIM zinc-binding domains follow at residues Thr71–Lys132 and Arg133–Gly194. A disordered region spans residues Glu253–Phe275. The homeobox DNA-binding region spans Thr268–Arg327.

It localises to the nucleus. In terms of biological role, may be involved in gonadal development. This chain is LIM/homeobox protein Lhx9 (lhx9), found in Xenopus laevis (African clawed frog).